The sequence spans 1522 residues: Adhesion G protein-coupled receptor B3 (1522 aa).

An N-terminal signal peptide occupies residues 1-25 (MKAVRNLLIYIFSTYLLVMFGFNAA). The Extracellular portion of the chain corresponds to 26-880 (QDFWCSTLVK…MESSGTPSVT (855 aa)). Positions 30–159 (CSTLVKGVIY…KSFFEFLVLN (130 aa)) constitute a CUB domain. 5 N-linked (GlcNAc...) asparagine glycosylation sites follow: asparagine 51, asparagine 54, asparagine 82, asparagine 105, and asparagine 241. TSP type-1 domains follow at residues 291–343 (ESGV…ALCP), 345–398 (HGVW…ALCP), 400–453 (DGQW…PECT), and 455–508 (NGQW…QRCP). Disulfide bonds link cysteine 303-cysteine 336, cysteine 307-cysteine 342, cysteine 318-cysteine 326, cysteine 357-cysteine 392, cysteine 361-cysteine 397, cysteine 372-cysteine 382, cysteine 412-cysteine 447, cysteine 416-cysteine 452, cysteine 427-cysteine 437, cysteine 467-cysteine 502, cysteine 471-cysteine 507, cysteine 482-cysteine 492, cysteine 514-cysteine 549, and cysteine 537-cysteine 567. Asparagine 337 carries an N-linked (GlcNAc...) asparagine glycan. N-linked (GlcNAc...) asparagine glycosylation is present at asparagine 418. N-linked (GlcNAc...) asparagine glycosylation occurs at asparagine 540. Phosphoserine is present on serine 619. Asparagine 625, asparagine 779, asparagine 812, and asparagine 828 each carry an N-linked (GlcNAc...) asparagine glycan. In terms of domain architecture, GAIN-B spans 693–869 (QNSYLMTGNV…AILAQQPREI (177 aa)). 2 cysteine pairs are disulfide-bonded: cysteine 819–cysteine 851 and cysteine 839–cysteine 853. Positions 819-869 (CVLWDDSKSNESLGTWSTQGCKTVLTDASHTKCLCDRLSTFAILAQQPREI) are GPS. The helical transmembrane segment at 881-901 (LIVGSGLSCLALITLAVVYAA) threads the bilayer. Over 902-910 (LWRYIRSER) the chain is Cytoplasmic. The helical transmembrane segment at 911–931 (SIILINFCLSIISSNILILVG) threads the bilayer. The Extracellular portion of the chain corresponds to 932 to 939 (QTQTHNKS). N-linked (GlcNAc...) asparagine glycosylation is present at asparagine 937. A helical transmembrane segment spans residues 940-960 (ICTTTTAFLHFFFLASFCWVL). At 961 to 981 (TEAWQSYMAVTGKIRTRLIRK) the chain is on the cytoplasmic side. A helical transmembrane segment spans residues 982–1002 (RFLCLGWGLPALVVATSVGFT). Topologically, residues 1003–1023 (RTKGYGTDHYCWLSLEGGLLY) are extracellular. A helical membrane pass occupies residues 1024–1044 (AFVGPAAAVVLVNMVIGILVF). At 1045–1098 (NKLVSRDGILDKKLKHRAGQMSEPHSGLTLKCAKCGVVSTTALSATTASNAMAS) the chain is on the cytoplasmic side. A helical membrane pass occupies residues 1099-1119 (LWSSCVVLPLLALTWMSAVLA). The Extracellular segment spans residues 1120–1125 (MTDKRS). Residues 1126–1146 (ILFQILFAVFDSLQGFVIVMV) traverse the membrane as a helical segment. Residues 1147-1522 (HCILRREVQD…VQEGDFQTEV (376 aa)) are Cytoplasmic-facing. 2 positions are modified to phosphoserine: serine 1220 and serine 1411.

Belongs to the G-protein coupled receptor 2 family. Adhesion G-protein coupled receptor (ADGR) subfamily. In terms of assembly, forms a heterodimer, consisting of a large extracellular region non-covalently linked to a seven-transmembrane moiety. Interacts (via its TSRs) with C1QL1, C1QL2, C1QL3 and C1QL4. Interacts via (C-terminus) with ELMO1, ELMO2 and ELMO3. The endogenous protein is proteolytically cleaved into 2 subunits, an extracellular subunit and a seven-transmembrane subunit. Brain-specific expression.

The protein resides in the cell membrane. Functionally, receptor that plays a role in the regulation of synaptogenesis and dendritic spine formation at least partly via interaction with ELMO1 and RAC1 activity. Promotes myoblast fusion through ELMO/DOCK1. The protein is Adhesion G protein-coupled receptor B3 (Adgrb3) of Mus musculus (Mouse).